A 475-amino-acid chain; its full sequence is tRNA-2-methylthio-N(6)-dimethylallyladenosine synthase (475 aa).

Over residues 1–10 the composition is skewed to basic and acidic residues; sequence MHETTLKREG. Residues 1-25 are disordered; it reads MHETTLKREGASTPSNPTPSTHAAG. Polar residues predominate over residues 12-23; it reads STPSNPTPSTHA. An MTTase N-terminal domain is found at 27–144; it reads GKIYIRTFGC…LPELIRRRRD (118 aa). Residues Cys-36, Cys-73, Cys-107, Cys-181, Cys-185, and Cys-188 each contribute to the [4Fe-4S] cluster site. Residues 167–400 form the Radical SAM core domain; the sequence is RVEGATAFVS…QALINEQAAA (234 aa). Residues 403-466 enclose the TRAM domain; sequence QSMVGTRQRL…TNSLRGRVAG (64 aa).

Belongs to the methylthiotransferase family. MiaB subfamily. Monomer. [4Fe-4S] cluster is required as a cofactor.

It is found in the cytoplasm. It catalyses the reaction N(6)-dimethylallyladenosine(37) in tRNA + (sulfur carrier)-SH + AH2 + 2 S-adenosyl-L-methionine = 2-methylsulfanyl-N(6)-dimethylallyladenosine(37) in tRNA + (sulfur carrier)-H + 5'-deoxyadenosine + L-methionine + A + S-adenosyl-L-homocysteine + 2 H(+). In terms of biological role, catalyzes the methylthiolation of N6-(dimethylallyl)adenosine (i(6)A), leading to the formation of 2-methylthio-N6-(dimethylallyl)adenosine (ms(2)i(6)A) at position 37 in tRNAs that read codons beginning with uridine. The protein is tRNA-2-methylthio-N(6)-dimethylallyladenosine synthase of Bordetella avium (strain 197N).